We begin with the raw amino-acid sequence, 173 residues long: Photosystem I assembly protein Ycf3 (173 aa).

3 TPR repeats span residues 35–68 (AYIY…EENA), 72–105 (GETL…NPKQ), and 120–153 (GRAL…YPGG).

This sequence belongs to the Ycf3 family.

Its subcellular location is the cellular thylakoid membrane. Essential for the assembly of the photosystem I (PSI) complex. May act as a chaperone-like factor to guide the assembly of the PSI subunits. This is Photosystem I assembly protein Ycf3 from Prochlorococcus marinus (strain SARG / CCMP1375 / SS120).